The chain runs to 281 residues: MQIITSPEELQRLCLDWRCGGVKTALVPTMGYYHAGHESLMAYARERADKVVVSLFVNPAQFAPGEDLAAYPRDLSGDAEVAQRAGADVLFTPQPEAMYPQGFDTWVEIPGLSSGLCGADRPGHFRGVCTVVMKLMLLTLPRLAVFGEKDWQQLAVLRRMAKDMHLPVTIDGCPIVRETDGLAMSSRNVYLTPEERRQAPALYQGLIRARDMVAGGERDTAVLRAAVKEYWKQHLPEGREDYLEIVHPDTLQPLERVGGMATCAAAVRLGRARLIDNLALI.

30–37 (MGYYHAGH) contacts ATP. H37 acts as the Proton donor in catalysis. A (R)-pantoate-binding site is contributed by Q61. Q61 is a beta-alanine binding site. 147–150 (GEKD) contacts ATP. Q153 serves as a coordination point for (R)-pantoate. ATP-binding positions include V176 and 184-187 (MSSR).

The protein belongs to the pantothenate synthetase family. Homodimer.

It is found in the cytoplasm. The catalysed reaction is (R)-pantoate + beta-alanine + ATP = (R)-pantothenate + AMP + diphosphate + H(+). Its pathway is cofactor biosynthesis; (R)-pantothenate biosynthesis; (R)-pantothenate from (R)-pantoate and beta-alanine: step 1/1. Catalyzes the condensation of pantoate with beta-alanine in an ATP-dependent reaction via a pantoyl-adenylate intermediate. This chain is Pantothenate synthetase, found in Oleidesulfovibrio alaskensis (strain ATCC BAA-1058 / DSM 17464 / G20) (Desulfovibrio alaskensis).